The following is a 165-amino-acid chain: Lipoprotein signal peptidase (165 aa).

3 helical membrane-spanning segments follow: residues 6–26 (SSVE…LLII), 68–88 (GKID…LFYF), and 95–115 (ISFL…GNMI). Residues D125 and D141 contribute to the active site. The chain crosses the membrane as a helical span at residues 132 to 152 (IWSFIFNFADVWINIGVVLII).

It belongs to the peptidase A8 family.

The protein resides in the cell inner membrane. The enzyme catalyses Release of signal peptides from bacterial membrane prolipoproteins. Hydrolyzes -Xaa-Yaa-Zaa-|-(S,diacylglyceryl)Cys-, in which Xaa is hydrophobic (preferably Leu), and Yaa (Ala or Ser) and Zaa (Gly or Ala) have small, neutral side chains.. The protein operates within protein modification; lipoprotein biosynthesis (signal peptide cleavage). In terms of biological role, this protein specifically catalyzes the removal of signal peptides from prolipoproteins. This Fusobacterium nucleatum subsp. nucleatum (strain ATCC 25586 / DSM 15643 / BCRC 10681 / CIP 101130 / JCM 8532 / KCTC 2640 / LMG 13131 / VPI 4355) protein is Lipoprotein signal peptidase.